We begin with the raw amino-acid sequence, 350 residues long: Eukaryotic translation initiation factor 3 subunit I (350 aa).

6 WD repeats span residues 8 to 49 (GHER…GTLE), 51 to 89 (HQGV…CVYT), 91 to 135 (DSPS…ATLS), 149 to 188 (SEGS…LVTS), 198 to 240 (EKNV…KVYK), and 296 to 335 (GHFG…QDFL).

It belongs to the eIF-3 subunit I family. Component of the eukaryotic translation initiation factor 3 (eIF-3) complex.

The protein resides in the cytoplasm. Its function is as follows. Component of the eukaryotic translation initiation factor 3 (eIF-3) complex, which is involved in protein synthesis of a specialized repertoire of mRNAs and, together with other initiation factors, stimulates binding of mRNA and methionyl-tRNAi to the 40S ribosome. The eIF-3 complex specifically targets and initiates translation of a subset of mRNAs involved in cell proliferation. This Candida albicans (strain SC5314 / ATCC MYA-2876) (Yeast) protein is Eukaryotic translation initiation factor 3 subunit I.